A 362-amino-acid polypeptide reads, in one-letter code: Protein RecA (362 aa).

77 to 84 lines the ATP pocket; the sequence is GPESSGKT.

The protein belongs to the RecA family.

The protein resides in the cytoplasm. Functionally, can catalyze the hydrolysis of ATP in the presence of single-stranded DNA, the ATP-dependent uptake of single-stranded DNA by duplex DNA, and the ATP-dependent hybridization of homologous single-stranded DNAs. It interacts with LexA causing its activation and leading to its autocatalytic cleavage. This is Protein RecA from Rhizobium leguminosarum bv. trifolii (strain WSM2304).